A 194-amino-acid chain; its full sequence is Ion-translocating oxidoreductase complex subunit A (194 aa).

Helical transmembrane passes span 4 to 24 (LVLI…QFLG), 39 to 59 (IGLA…SYLL), 72 to 92 (LRTI…EMLV), 102 to 122 (VLGI…VALL), 135 to 155 (GING…FAAM), and 172 to 192 (AIGL…SGLI).

It belongs to the NqrDE/RnfAE family. As to quaternary structure, the complex is composed of six subunits: RnfA, RnfB, RnfC, RnfD, RnfE and RnfG.

The protein resides in the cell inner membrane. Its function is as follows. Part of a membrane-bound complex that couples electron transfer with translocation of ions across the membrane. The polypeptide is Ion-translocating oxidoreductase complex subunit A (Azotobacter vinelandii (strain DJ / ATCC BAA-1303)).